A 101-amino-acid chain; its full sequence is Putative septation protein SpoVG (101 aa).

Positions 82 to 101 (ELKKGGAAPARATGTDPHED) are disordered.

It belongs to the SpoVG family.

Functionally, could be involved in septation. This chain is Putative septation protein SpoVG, found in Anaeromyxobacter dehalogenans (strain 2CP-1 / ATCC BAA-258).